The chain runs to 224 residues: A-factor barrier protein 1 (224 aa).

Positions 1-25 (MIFAPSFSLIKNILLVSFLISHSFA) are cleaved as a signal peptide. N-linked (GlcNAc...) asparagine glycosylation is found at N148, N181, and N191. Residue N203 is the site of GPI-anchor amidated asparagine attachment. A propeptide spans 204 to 224 (GAHAKSLYFPMALFGIFAVAL) (removed in mature form).

This sequence belongs to the SRP1/TIP1 family. Post-translationally, the GPI-anchor is attached to the protein in the endoplasmic reticulum and serves to target the protein to the cell surface. There, the glucosamine-inositol phospholipid moiety is cleaved off and the GPI-modified mannoprotein is covalently attached via its lipidless GPI glycan remnant to the 1,6-beta-glucan of the outer cell wall layer.

Its subcellular location is the secreted. It is found in the cell wall. The protein localises to the membrane. MATalpha-specific protein that interferes with a-factor, the pheromone secreted by MATa cells. Contributes to mating efficiency. Acts to bind and sequester a-factor rather than to degrade it, and promotes the efficient mating of MATalpha cells by keeping the a-factor concentration at the plasma membrane within the narrow range needed for accurate pheromone gradient detection. The protein is A-factor barrier protein 1 of Saccharomyces cerevisiae (strain ATCC 204508 / S288c) (Baker's yeast).